The sequence spans 250 residues: Acetylglutamate kinase (250 aa).

Residues 41 to 42 (GG), Arg63, and Asn156 contribute to the substrate site.

Belongs to the acetylglutamate kinase family. ArgB subfamily.

The protein resides in the cytoplasm. The catalysed reaction is N-acetyl-L-glutamate + ATP = N-acetyl-L-glutamyl 5-phosphate + ADP. The protein operates within amino-acid biosynthesis; L-arginine biosynthesis; N(2)-acetyl-L-ornithine from L-glutamate: step 2/4. Catalyzes the ATP-dependent phosphorylation of N-acetyl-L-glutamate. The chain is Acetylglutamate kinase from Listeria monocytogenes serotype 4a (strain HCC23).